The chain runs to 362 residues: Tryptophan 2,3-dioxygenase (362 aa).

Residues 40 to 44 (FIIVH) and R111 contribute to the substrate site. H297 serves as a coordination point for heme. Residue T311 participates in substrate binding.

This sequence belongs to the tryptophan 2,3-dioxygenase family. In terms of assembly, homotetramer. Heme serves as cofactor.

It catalyses the reaction L-tryptophan + O2 = N-formyl-L-kynurenine. Its pathway is amino-acid degradation; L-tryptophan degradation via kynurenine pathway; L-kynurenine from L-tryptophan: step 1/2. Heme-dependent dioxygenase that catalyzes the oxidative cleavage of the L-tryptophan (L-Trp) pyrrole ring and converts L-tryptophan to N-formyl-L-kynurenine. Catalyzes the oxidative cleavage of the indole moiety. This is Tryptophan 2,3-dioxygenase from Alteromonas mediterranea (strain DSM 17117 / CIP 110805 / LMG 28347 / Deep ecotype).